A 79-amino-acid chain; its full sequence is RNA-binding protein Hfq (79 aa).

In terms of domain architecture, Sm spans 10–69 (DPFLNALRKEHVPVSIYLVNGIKLQGNIESFDQYVVLLRNTVTQMVYKHAISTVVPARPV).

Belongs to the Hfq family. Homohexamer.

In terms of biological role, RNA chaperone that binds small regulatory RNA (sRNAs) and mRNAs to facilitate mRNA translational regulation in response to envelope stress, environmental stress and changes in metabolite concentrations. Also binds with high specificity to tRNAs. This is RNA-binding protein Hfq from Burkholderia mallei (strain ATCC 23344).